A 378-amino-acid polypeptide reads, in one-letter code: 1-acyl-sn-glycerol-3-phosphate acyltransferase delta (378 aa).

Residues 11-31 (FLCHLIFCYVFIVSGLIINTI) form a helical membrane-spanning segment. The HXXXXD motif motif lies at 96–101 (HKFEID). 3 helical membrane passes run 125–145 (ELAY…VFCT), 307–327 (TLVN…RFVI), and 338–358 (LASF…MIGV).

The protein belongs to the 1-acyl-sn-glycerol-3-phosphate acyltransferase family.

The protein localises to the endoplasmic reticulum membrane. It carries out the reaction a 1-acyl-sn-glycero-3-phosphate + an acyl-CoA = a 1,2-diacyl-sn-glycero-3-phosphate + CoA. The catalysed reaction is (4Z,7Z,10Z,13Z,16Z,19Z)-docosahexaenoyl-CoA + 1-hexadecanoyl-sn-glycero-3-phosphate = 1-hexadecanoyl-2-(4Z,7Z,10Z,13Z,16Z,19Z-docosahexaenoyl)-sn-glycero-3-phosphate + CoA. The enzyme catalyses 1-octadecanoyl-sn-glycero-3-phosphate + (9Z,12Z)-octadecadienoyl-CoA = 1-octadecanoyl-2-(9Z,12Z-octadecadienoyl)-sn-glycero-3-phosphate + CoA. It catalyses the reaction 1-octadecanoyl-sn-glycero-3-phosphate + (4Z,7Z,10Z,13Z,16Z,19Z)-docosahexaenoyl-CoA = 1-octadecanoyl-2-(4Z,7Z,10Z,13Z,16Z,19Z-docosahexaenoyl)-sn-glycero-3-phosphate + CoA. It carries out the reaction (4Z,7Z,10Z,13Z,16Z,19Z)-docosahexaenoyl-CoA + 1-(9Z-octadecenoyl)-sn-glycero-3-phosphate = 1-(9Z-octadecenoyl)-2-(4Z,7Z,10Z,13Z,16Z,19Z-docosahexaenoyl)-sn-glycero-3-phosphate + CoA. The protein operates within phospholipid metabolism; CDP-diacylglycerol biosynthesis; CDP-diacylglycerol from sn-glycerol 3-phosphate: step 2/3. Its function is as follows. Converts 1-acyl-sn-glycerol-3-phosphate (lysophosphatidic acid or LPA) into 1,2-diacyl-sn-glycerol-3-phosphate (phosphatidic acid or PA) by incorporating an acyl moiety at the sn-2 position of the glycerol backbone. Exhibits high acyl-CoA specificity for polyunsaturated fatty acyl-CoA, especially docosahexaenoyl-CoA (22:6-CoA, DHA-CoA). This Bos taurus (Bovine) protein is 1-acyl-sn-glycerol-3-phosphate acyltransferase delta (AGPAT4).